Here is a 433-residue protein sequence, read N- to C-terminus: Succinate--CoA ligase [GDP-forming] subunit beta, mitochondrial (433 aa).

The transit peptide at 1–38 directs the protein to the mitochondrion; that stretch reads MASPVAIAAQAGKLLRERALRPLLAVRSQAGHLTPRRW. The ATP-grasp domain occupies 47 to 275; that stretch reads KKLMSEHGVR…NAEFRQKDIF (229 aa). Residue Gln58 participates in GTP binding. Residue Lys67 is modified to N6-acetyllysine; alternate. Position 67 is an N6-succinyllysine; alternate (Lys67). Lys74 carries the post-translational modification N6-acetyllysine. Residue Lys79 is modified to N6-succinyllysine. 91 to 93 is a binding site for GTP; that stretch reads GRG. N6-acetyllysine occurs at positions 112, 133, and 140. GTP is bound at residue Leu147. Ser162 carries the phosphoserine modification. At Lys201 the chain carries N6-acetyllysine. Ser217 carries the phosphoserine modification. N6-acetyllysine is present on residues Lys219 and Lys228. Mg(2+) is bound by residues Asn244 and Asp258. Lys272 carries the post-translational modification N6-acetyllysine. Asn309 is a substrate binding site. Lys339 is subject to N6-succinyllysine. Lys348 carries the post-translational modification N6-acetyllysine. Position 366 to 368 (366 to 368) interacts with substrate; sequence GIV. Lys387, Lys407, and Lys424 each carry N6-acetyllysine.

Belongs to the succinate/malate CoA ligase beta subunit family. GTP-specific subunit beta subfamily. In terms of assembly, heterodimer of an alpha and a beta subunit. The beta subunit determines specificity for GTP. The cofactor is Mg(2+).

The protein localises to the mitochondrion. It carries out the reaction GTP + succinate + CoA = succinyl-CoA + GDP + phosphate. The protein operates within carbohydrate metabolism; tricarboxylic acid cycle; succinate from succinyl-CoA (ligase route): step 1/1. Its function is as follows. GTP-specific succinyl-CoA synthetase functions in the citric acid cycle (TCA), coupling the hydrolysis of succinyl-CoA to the synthesis of GTP and thus represents the only step of substrate-level phosphorylation in the TCA. The beta subunit provides nucleotide specificity of the enzyme and binds the substrate succinate, while the binding sites for coenzyme A and phosphate are found in the alpha subunit. The protein is Succinate--CoA ligase [GDP-forming] subunit beta, mitochondrial of Mus musculus (Mouse).